Here is a 191-residue protein sequence, read N- to C-terminus: Prophage tail fiber assembly protein homolog TfaR (191 aa).

This sequence belongs to the tfa family.

The sequence is that of Prophage tail fiber assembly protein homolog TfaR (tfaR) from Escherichia coli (strain K12).